We begin with the raw amino-acid sequence, 505 residues long: Histidine--tRNA ligase (505 aa).

Belongs to the class-II aminoacyl-tRNA synthetase family. As to quaternary structure, homodimer.

It localises to the cytoplasm. The catalysed reaction is tRNA(His) + L-histidine + ATP = L-histidyl-tRNA(His) + AMP + diphosphate + H(+). The sequence is that of Histidine--tRNA ligase from Jannaschia sp. (strain CCS1).